The primary structure comprises 61 residues: Metallothionein-1E (61 aa).

Residue M1 is modified to N-acetylmethionine. A beta region spans residues 1-29 (MDPNCSCATGGSCTCAGSCKCKECKCTSC). A divalent metal cation contacts are provided by C5, C7, C13, C15, C19, C21, C24, C26, C29, C33, C34, C36, C37, C41, C44, C48, C50, C57, C59, and C60. Positions 30 to 61 (KKSCCSCCPVGCAKCAQGCVCKGASEKCSCCA) are alpha.

The protein belongs to the metallothionein superfamily. Type 1 family. As to quaternary structure, monomer.

Metallothioneins have a high content of cysteine residues that bind various heavy metals; these proteins are transcriptionally regulated by both heavy metals and glucocorticoids. The protein is Metallothionein-1E (MT1E) of Homo sapiens (Human).